Here is a 417-residue protein sequence, read N- to C-terminus: UDP-N-acetylmuramoylalanine--D-glutamate ligase (417 aa).

Residue 101–107 coordinates ATP; that stretch reads GTAGKTS.

Belongs to the MurCDEF family.

It localises to the cytoplasm. The enzyme catalyses UDP-N-acetyl-alpha-D-muramoyl-L-alanine + D-glutamate + ATP = UDP-N-acetyl-alpha-D-muramoyl-L-alanyl-D-glutamate + ADP + phosphate + H(+). Its pathway is cell wall biogenesis; peptidoglycan biosynthesis. Cell wall formation. Catalyzes the addition of glutamate to the nucleotide precursor UDP-N-acetylmuramoyl-L-alanine (UMA). The protein is UDP-N-acetylmuramoylalanine--D-glutamate ligase of Thermus thermophilus (strain ATCC BAA-163 / DSM 7039 / HB27).